We begin with the raw amino-acid sequence, 1186 residues long: Atrophin-1 (1186 aa).

Disordered stretches follow at residues 1 to 604 (MKTR…PTVT), 618 to 763 (ASSP…ARFN), and 781 to 858 (VPLE…HRPP). Residues 16–32 (RKKEAPGPREELRSRGR) carry the Nuclear localization signal motif. Positions 17–29 (KKEAPGPREELRS) are enriched in basic and acidic residues. Serine 34 is subject to Phosphoserine. Residues 45–63 (GKAEKSRQTAKKARVEEAS) are compositionally biased toward basic and acidic residues. Serine 77, serine 79, serine 100, serine 102, and serine 106 each carry phosphoserine. The segment covering 107 to 127 (LDGRSLNDDGSSDPRDIDQDN) has biased composition (basic and acidic residues). The segment covering 128-151 (RSTSPSIYSPGSVENDSDSSSGLS) has biased composition (polar residues). Residues 157–173 (PYHPPPLFPPSPQPPDS) are compositionally biased toward pro residues. Low complexity-rich tracts occupy residues 258 to 270 (PISVSSSGASGAP), 349 to 365 (PTLAPSPHSLPPASSSA), and 375 to 396 (SSSSSSSAAASSSSSSSSSSAS). Over residues 416-437 (SLSVSNQPPKYTQPSLPSQAVW) the composition is skewed to polar residues. The segment covering 484 to 503 (QQQQQQQQQQQQQQQHHGNS) has biased composition (low complexity). Positions 513–563 (HPLEGGSSHHAHPYAMSPSLGSLRPYPPGPAHLPPPHSQVSYSQAGPNGPP) are involved in binding BAIAP2. Pro residues predominate over residues 537–549 (PYPPGPAHLPPPH). Low complexity-rich tracts occupy residues 565-582 (SSSSNSSSSTSQGSYPCS) and 618-628 (ASSPAGYKTAS). Serine 628 carries the phosphoserine modification. Lysine 637 bears the N6-acetyllysine mark. Threonine 649 carries the phosphothreonine modification. At serine 657 the chain carries Phosphoserine. Residue threonine 665 is modified to Phosphothreonine. Pro residues-rich tracts occupy residues 689–714 (GPGPLPPAGPSGLPSLPPPPAAPASG) and 735–748 (SPVPPARSPSPPPK). At serine 735 the chain carries Phosphoserine; by MAPK8. Phosphoserine is present on residues serine 742 and serine 744. Positions 791–835 (KRADLVEKVRREAEQRAREEKEREREREREKEREREKERELERSV) are enriched in basic and acidic residues. A required for interaction with FAT1 region spans residues 875 to 890 (DTPALRTLSEYARPHV). Serine 892 is subject to Phosphoserine. Residues 1029 to 1037 (ALGNDPLAR) carry the Nuclear export signal motif. At arginine 1111 the chain carries Asymmetric dimethylarginine. Lysine 1179 participates in a covalent cross-link: Glycyl lysine isopeptide (Lys-Gly) (interchain with G-Cter in SUMO2).

Interacts with NR2E1; the interaction represses the transcriptional activity of NR2E1. Interacts with BAIAP2, WWP1, WWP2, WWP3 and RERE. Interacts (via its N-terminus) with MTG8; the interaction enhances transcriptional repression of MTG8. Interacts with FAT1 (via a C-terminal domain). Interacts with PQBP1. Post-translationally, phosphorylated in vitro by MAPK8/JNK1 on Ser-735.

It localises to the nucleus. The protein localises to the cytoplasm. The protein resides in the perinuclear region. It is found in the cell junction. Its function is as follows. Transcriptional corepressor. Corepressor of MTG8 transcriptional repression. Recruits NR2E1 to repress transcription. Has some intrinsic repression activity. Promotes vascular smooth cell (VSMC) migration and orientation. This Pan troglodytes (Chimpanzee) protein is Atrophin-1 (ATN1).